The following is an 846-amino-acid chain: Translation initiation factor IF-2 (846 aa).

The tract at residues 198–219 (YKREEEEKKSKAKKAGGKGFKK) is disordered. A compositionally biased stretch (basic residues) spans 207–219 (SKAKKAGGKGFKK). One can recognise a tr-type G domain in the interval 345–512 (SRAPVVTIMG…AVLLQSEVLE (168 aa)). A G1 region spans residues 354–361 (GHVDHGKT). 354-361 (GHVDHGKT) lines the GTP pocket. The G2 stretch occupies residues 379–383 (GITQH). The tract at residues 400-403 (DTPG) is G3. GTP is bound by residues 400-404 (DTPGH) and 454-457 (NKID). The G4 stretch occupies residues 454 to 457 (NKID). The segment at 490–492 (SAK) is G5.

This sequence belongs to the TRAFAC class translation factor GTPase superfamily. Classic translation factor GTPase family. IF-2 subfamily.

Its subcellular location is the cytoplasm. Functionally, one of the essential components for the initiation of protein synthesis. Protects formylmethionyl-tRNA from spontaneous hydrolysis and promotes its binding to the 30S ribosomal subunits. Also involved in the hydrolysis of GTP during the formation of the 70S ribosomal complex. The polypeptide is Translation initiation factor IF-2 (Francisella tularensis subsp. tularensis (strain SCHU S4 / Schu 4)).